Reading from the N-terminus, the 465-residue chain is Serine/threonine-protein kinase 38 (465 aa).

At Ala2 the chain carries N-acetylalanine. The segment at 62–87 is interaction with S100B; that stretch reads KRLRRSAHARKETEFLRLKRTRLGLE. Phosphothreonine is present on Thr74. Residues 89-382 form the Protein kinase domain; it reads FESLKVIGRG…VEEIKNNSFF (294 aa). ATP contacts are provided by residues 95–103 and Lys118; that span reads IGRGAFGEV. Asp212 serves as the catalytic Proton acceptor. Position 264 is a phosphoserine (Ser264). Phosphoserine; by autocatalysis is present on Ser281. A UFM1-interacting motif (UFIM) motif is present at residues 306-311; that stretch reads WSLGVI. The region spanning 383 to 455 is the AGC-kinase C-terminal domain; it reads EGVDWEHIRE…KRFEGLTARG (73 aa). A Phosphothreonine; by STK24/MST3 modification is found at Thr444.

The protein belongs to the protein kinase superfamily. AGC Ser/Thr protein kinase family. Homodimeric S100B binds two molecules of STK38. Interacts with MOB1 and MOB2. Interacts with MAP3K1 and MAP3K2 (via the kinase domain). Forms a tripartite complex with MOBKL1B and STK3/MST2. Interacts with MICAL1; leading to inhibit the protein kinase activity by antagonizing activation by MST1/STK4. Mg(2+) is required as a cofactor. Post-translationally, ISGylated. In terms of processing, phosphorylated by STK3/MST2 and this is enhanced by MOBKL1B.

The protein localises to the nucleus. It localises to the cytoplasm. Its subcellular location is the chromosome. It carries out the reaction L-seryl-[protein] + ATP = O-phospho-L-seryl-[protein] + ADP + H(+). The catalysed reaction is L-threonyl-[protein] + ATP = O-phospho-L-threonyl-[protein] + ADP + H(+). Its activity is regulated as follows. Activated by binding of S100B which releases autoinhibitory N-lobe interactions, enabling ATP to bind and the autophosphorylation of Ser-281. Thr-444 then undergoes calcium-dependent phosphorylation by STK24/MST3. Interactions between phosphorylated Thr-444 and the N-lobe promote additional structural changes that complete the activation of the kinase. Autoinhibition is also released by the binding of MOB1/MOBKL1A and MOB2/HCCA2 to the N-terminal of STK38. Serine/threonine-protein kinase that acts as a negative regulator of MAP3K1/2 signaling. Converts MAP3K2 from its phosphorylated form to its non-phosphorylated form and inhibits autophosphorylation of MAP3K2. Acts as an ufmylation 'reader' in a kinase-independent manner: specifically recognizes and binds mono-ufmylated histone H4 in response to DNA damage, promoting the recruitment of SUV39H1 to the double-strand breaks, resulting in ATM activation. This is Serine/threonine-protein kinase 38 (STK38) from Bos taurus (Bovine).